Here is a 180-residue protein sequence, read N- to C-terminus: MSRIGRLPIAVPSGVEVKLDGQYVEVKGPKGTLNFTVREPITVSKNDEGAILVERPDDERENRSLHGLTRTLINNMVIGVTEGYEKKLEIQGVGYRVLSKGPKQLEFNLGFSHPVIVDAPEGITFAVENPTKFSVQGIDKQVVGETAANIRKIRKPEPYKGKGVRYEGENVRRKVGKAGK.

The protein belongs to the universal ribosomal protein uL6 family. In terms of assembly, part of the 50S ribosomal subunit.

This protein binds to the 23S rRNA, and is important in its secondary structure. It is located near the subunit interface in the base of the L7/L12 stalk, and near the tRNA binding site of the peptidyltransferase center. The protein is Large ribosomal subunit protein uL6 of Cutibacterium acnes (strain DSM 16379 / KPA171202) (Propionibacterium acnes).